A 168-amino-acid polypeptide reads, in one-letter code: NADH-quinone oxidoreductase subunit B (168 aa).

The [4Fe-4S] cluster site is built by Cys49, Cys50, Cys114, and Cys144.

It belongs to the complex I 20 kDa subunit family. In terms of assembly, NDH-1 is composed of 14 different subunits. Subunits NuoB, C, D, E, F, and G constitute the peripheral sector of the complex. [4Fe-4S] cluster serves as cofactor.

The protein localises to the cell membrane. It catalyses the reaction a quinone + NADH + 5 H(+)(in) = a quinol + NAD(+) + 4 H(+)(out). NDH-1 shuttles electrons from NADH, via FMN and iron-sulfur (Fe-S) centers, to quinones in the respiratory chain. Couples the redox reaction to proton translocation (for every two electrons transferred, four hydrogen ions are translocated across the cytoplasmic membrane), and thus conserves the redox energy in a proton gradient. The sequence is that of NADH-quinone oxidoreductase subunit B from Wolbachia pipientis wMel.